A 297-amino-acid chain; its full sequence is UDP-N-acetylenolpyruvoylglucosamine reductase (297 aa).

An FAD-binding PCMH-type domain is found at T27–E191. The active site involves R170. Catalysis depends on S220, which acts as the Proton donor. Residue E290 is part of the active site.

It belongs to the MurB family. FAD serves as cofactor.

Its subcellular location is the cytoplasm. It carries out the reaction UDP-N-acetyl-alpha-D-muramate + NADP(+) = UDP-N-acetyl-3-O-(1-carboxyvinyl)-alpha-D-glucosamine + NADPH + H(+). Its pathway is cell wall biogenesis; peptidoglycan biosynthesis. Its function is as follows. Cell wall formation. The chain is UDP-N-acetylenolpyruvoylglucosamine reductase from Listeria welshimeri serovar 6b (strain ATCC 35897 / DSM 20650 / CCUG 15529 / CIP 8149 / NCTC 11857 / SLCC 5334 / V8).